The chain runs to 209 residues: Histidine biosynthesis bifunctional protein HisIE (209 aa).

A phosphoribosyl-AMP cyclohydrolase region spans residues 1-116 (MKQADELRFN…EEQAADRFGI (116 aa)). The interval 117-209 (MNELERVIAE…LKKRHSEIEE (93 aa)) is phosphoribosyl-ATP pyrophosphohydrolase.

This sequence in the N-terminal section; belongs to the PRA-CH family. It in the C-terminal section; belongs to the PRA-PH family.

The protein resides in the cytoplasm. The catalysed reaction is 1-(5-phospho-beta-D-ribosyl)-ATP + H2O = 1-(5-phospho-beta-D-ribosyl)-5'-AMP + diphosphate + H(+). The enzyme catalyses 1-(5-phospho-beta-D-ribosyl)-5'-AMP + H2O = 1-(5-phospho-beta-D-ribosyl)-5-[(5-phospho-beta-D-ribosylamino)methylideneamino]imidazole-4-carboxamide. The protein operates within amino-acid biosynthesis; L-histidine biosynthesis; L-histidine from 5-phospho-alpha-D-ribose 1-diphosphate: step 2/9. Its pathway is amino-acid biosynthesis; L-histidine biosynthesis; L-histidine from 5-phospho-alpha-D-ribose 1-diphosphate: step 3/9. The polypeptide is Histidine biosynthesis bifunctional protein HisIE (hisI) (Bacillus subtilis (strain 168)).